A 75-amino-acid chain; its full sequence is UPF0729 protein C18orf32 homolog (75 aa).

Positions 1-37 (MVCIPCIVIPVLLWVYKRFLEPVLYPIISPIISRFWR) are necessary for its localzation to the endoplasmic reticulum and lipid droplets. Over residues 43-65 (DTPQQKTSTAECNGAANGSTANG) the composition is skewed to polar residues. A disordered region spans residues 43 to 75 (DTPQQKTSTAECNGAANGSTANGPKTVADKKAD).

Belongs to the UPF0729 family.

It localises to the endoplasmic reticulum. The protein localises to the lipid droplet. The protein is UPF0729 protein C18orf32 homolog of Danio rerio (Zebrafish).